The chain runs to 362 residues: 3-dehydroquinate synthase (362 aa).

NAD(+)-binding positions include 71–76 (DGEQYK), 105–109 (GVVGD), 129–130 (TT), lysine 142, lysine 151, and 169–172 (CLKT). Glutamate 184, histidine 247, and histidine 264 together coordinate Zn(2+).

Belongs to the sugar phosphate cyclases superfamily. Dehydroquinate synthase family. Requires Co(2+) as cofactor. The cofactor is Zn(2+). NAD(+) serves as cofactor.

The protein resides in the cytoplasm. It carries out the reaction 7-phospho-2-dehydro-3-deoxy-D-arabino-heptonate = 3-dehydroquinate + phosphate. It participates in metabolic intermediate biosynthesis; chorismate biosynthesis; chorismate from D-erythrose 4-phosphate and phosphoenolpyruvate: step 2/7. Functionally, catalyzes the conversion of 3-deoxy-D-arabino-heptulosonate 7-phosphate (DAHP) to dehydroquinate (DHQ). The polypeptide is 3-dehydroquinate synthase (Escherichia coli (strain K12 / MC4100 / BW2952)).